A 534-amino-acid chain; its full sequence is Protein tweety homolog 2 (534 aa).

Topologically, residues 1–44 (MQAARVDYIAPWWVVWLHSVPHVGLRLQPVNSTFSPGDESYQES) are extracellular. An N-linked (GlcNAc...) asparagine glycan is attached at Asn-31. Residues 45-65 (LLFLGLVAAVCLGLNLIFLVA) form a helical membrane-spanning segment. Residues 66 to 87 (YLVCACHCRRDDAVQTKQHHSC) lie on the Cytoplasmic side of the membrane. Residues 88–108 (CITWTAVVAGLICCAAVGVGF) traverse the membrane as a helical segment. Over 109–213 (YGNSETNDGA…QTGYVEYYRW (105 aa)) the chain is Extracellular. Ca(2+) is bound by residues Glu-113 and Asp-116. N-linked (GlcNAc) asparagine glycosylation occurs at Asn-129. Positions 164–166 (RGD) match the RGD motif. The residue at position 199 (Thr-199) is a Phosphothreonine. The chain crosses the membrane as a helical span at residues 214-234 (LSYLLLFILDLVICLIACLGL). The Cytoplasmic segment spans residues 235–240 (AKRSKC). A helical membrane pass occupies residues 241-261 (LLASMLCCGALSLLLSWASLA). The Extracellular segment spans residues 262–388 (ADGSAAVATS…AGICYDGLQG (127 aa)). Disulfide bonds link Cys-274–Cys-382 and Cys-300–Cys-367. Asn-283 carries an N-linked (GlcNAc...) asparagine glycan. Asn-352 carries an N-linked (GlcNAc) asparagine glycan. The helical transmembrane segment at 389 to 409 (LLYLGLFSFLAALAFSTMICA) threads the bilayer. At 410 to 534 (GPRAWKHFTT…LRHYGNQFPA (125 aa)) the chain is on the cytoplasmic side. At Ser-504 the chain carries Phosphoserine. A PY-motif; mediates interaction with NEDD4L motif is present at residues 506-509 (PPTY).

The protein belongs to the tweety family. Homodimer. Forms cis-homodimers in the presence of Ca(+2) and forms monomers and trans-dimers in the absence of Ca(2+). Interacts with NEDD4L. In terms of processing, N- Glycosylated. Contains high-mannose, hybrid and complex oligosaccharides. Ubiquitinated by NEDD4L, leading to its proteasomal degradation. Expressed at higher level in brain and testis and at lower levels in heart, ovary, spleen and peripheral blood leukocytes. Up-regulated in 13 of 16 renal cell carcinoma samples examined. Up-regulated in colon carcinoma.

The protein resides in the cell membrane. It carries out the reaction chloride(in) = chloride(out). The catalysed reaction is L-glutamate(out) = L-glutamate(in). Its function is as follows. Calcium-independent, swelling-dependent volume-regulated anion channel (VRAC-swell) which plays a pivotal role in the process of regulatory volume decrease (RVD) in the brain through the efflux of anions like chloride and organic osmolytes like glutamate. Probable large-conductance Ca(2+)-activated chloride channel. In Homo sapiens (Human), this protein is Protein tweety homolog 2 (TTYH2).